The primary structure comprises 163 residues: Photosystem II extrinsic protein V (163 aa).

The N-terminal stretch at 1–26 (MFKKSYQFFALVLFSIFNVLVTSASA) is a signal peptide. Heme c contacts are provided by C63, C66, H67, and H118.

It belongs to the cytochrome c family. PsbV subfamily. As to quaternary structure, PSII is composed of 1 copy each of membrane proteins PsbA, PsbB, PsbC, PsbD, PsbE, PsbF, PsbH, PsbI, PsbJ, PsbK, PsbL, PsbM, PsbT, PsbY, PsbZ, Psb30/Ycf12, at least 3 peripheral proteins of the oxygen-evolving complex and a large number of cofactors. It forms dimeric complexes. The cofactor is heme c.

The protein resides in the plastid. Its subcellular location is the chloroplast thylakoid membrane. In terms of biological role, one of the extrinsic, lumenal subunits of photosystem II (PSII). PSII is a light-driven water plastoquinone oxidoreductase, using light energy to abstract electrons from H(2)O, generating a proton gradient subsequently used for ATP formation. The extrinsic proteins stabilize the structure of photosystem II oxygen-evolving complex (OEC), the ion environment of oxygen evolution and protect the OEC against heat-induced inactivation. The chain is Photosystem II extrinsic protein V from Trieres chinensis (Marine centric diatom).